Reading from the N-terminus, the 153-residue chain is Superoxide dismutase [Cu-Zn] (153 aa).

Cu cation contacts are provided by H45, H47, and H62. Cysteines 56 and 145 form a disulfide. Zn(2+) contacts are provided by H62, H70, H79, and D82. H119 serves as a coordination point for Cu cation.

It belongs to the Cu-Zn superoxide dismutase family. Homodimer. Cu cation serves as cofactor. Requires Zn(2+) as cofactor.

The protein resides in the cytoplasm. It catalyses the reaction 2 superoxide + 2 H(+) = H2O2 + O2. Its function is as follows. Destroys radicals which are normally produced within the cells and which are toxic to biological systems. The protein is Superoxide dismutase [Cu-Zn] of Drosophila orena (Fruit fly).